Here is a 503-residue protein sequence, read N- to C-terminus: Alpha-1-syntrophin (503 aa).

PH domains are found at residues 6 to 263 (RAPR…AQIG) and 287 to 399 (DIKQ…DGCH). The interval 40–68 (LTVSPADGEPGPEPEPAQLNGAAEPGAAP) is disordered. The region spanning 81 to 164 (RVTVRKADAG…EVVLEVKYMK (84 aa)) is the PDZ domain. S95, S178, S183, S187, and S194 each carry phosphoserine. Residues 177-203 (TSVGWDSPPASPLQRQPSSPGPQPRNL) form a disordered region. Positions 447-503 (PFEKLQMSSDDGTSLLFLDFGGAEGEIQLDLHSCPKTMVFIIHSFLSAKVTRLGLLA) constitute an SU domain. A calmodulin-binding region spans residues 481-503 (PKTMVFIIHSFLSAKVTRLGLLA).

It belongs to the syntrophin family. As to quaternary structure, monomer and homodimer. Interacts with MAPK12, TGFA, GA and F-actin. Interacts with the other members of the syntrophin family: SNTB1 and SNTB2; with dystrophin protein DMD and related proteins DTNA and UTRN; SGCG and SGCA of the dystrophin glycoprotein complex; NOS1; GRB2; calmodulin and the sodium channel proteins SCN4A and SCN5A. Interacts with MYOC; regulates muscle hypertrophy. Interacts with DTNB. In terms of processing, phosphorylated by CaM-kinase II. Phosphorylation may inhibit the interaction with DMD. In terms of tissue distribution, high expression in skeletal muscle. Expressed at intermediate level in heart, kidney and brain, and at low level in intestine, liver, lung and testis.

Its subcellular location is the cell membrane. It is found in the sarcolemma. It localises to the cell junction. The protein localises to the cytoplasm. The protein resides in the cytoskeleton. Its function is as follows. Adapter protein that binds to and probably organizes the subcellular localization of a variety of membrane proteins. May link various receptors to the actin cytoskeleton and the extracellular matrix via the dystrophin glycoprotein complex. Plays an important role in synapse formation and in the organization of UTRN and acetylcholine receptors at the neuromuscular synapse. Binds to phosphatidylinositol 4,5-bisphosphate. The protein is Alpha-1-syntrophin (Snta1) of Mus musculus (Mouse).